The following is a 334-amino-acid chain: D-fructose 1,6-bisphosphatase class 2/sedoheptulose 1,7-bisphosphatase (334 aa).

Mn(2+) is bound by residues Asp33, Glu57, Asp85, and Glu88. Residues 88–90 (EGT), Tyr119, 164–166 (RAR), and 186–188 (DGD) each bind substrate. Glu213 serves as a coordination point for Mn(2+).

This sequence belongs to the FBPase class 2 family. In terms of assembly, homotetramer. It depends on Mn(2+) as a cofactor.

It catalyses the reaction beta-D-fructose 1,6-bisphosphate + H2O = beta-D-fructose 6-phosphate + phosphate. The catalysed reaction is D-sedoheptulose 1,7-bisphosphate + H2O = D-sedoheptulose 7-phosphate + phosphate. It functions in the pathway carbohydrate biosynthesis; Calvin cycle. Catalyzes the hydrolysis of fructose 1,6-bisphosphate (Fru 1,6-P2) and sedoheptulose 1,7-bisphosphate (Sed 1,7-P2) to fructose 6-phosphate and sedoheptulose 7-phosphate, respectively. In Synechococcus sp. (strain CC9605), this protein is D-fructose 1,6-bisphosphatase class 2/sedoheptulose 1,7-bisphosphatase.